A 92-amino-acid chain; its full sequence is Small ribosomal subunit protein uS19 (92 aa).

Belongs to the universal ribosomal protein uS19 family.

Protein S19 forms a complex with S13 that binds strongly to the 16S ribosomal RNA. This chain is Small ribosomal subunit protein uS19, found in Cyanothece sp. (strain PCC 7425 / ATCC 29141).